The chain runs to 259 residues: Glutamate racemase (259 aa).

Residues 7–8 and 39–40 each bind substrate; these read DS and YG. Cys-70 acts as the Proton donor/acceptor in catalysis. Residue 71–72 participates in substrate binding; the sequence is NS. Cys-180 serves as the catalytic Proton donor/acceptor. 181 to 182 serves as a coordination point for substrate; that stretch reads TH.

This sequence belongs to the aspartate/glutamate racemases family.

The catalysed reaction is L-glutamate = D-glutamate. The protein operates within cell wall biogenesis; peptidoglycan biosynthesis. Functionally, provides the (R)-glutamate required for cell wall biosynthesis. The sequence is that of Glutamate racemase from Hydrogenobaculum sp. (strain Y04AAS1).